The following is a 227-amino-acid chain: Large ribosomal subunit protein bL25 (227 aa).

This sequence belongs to the bacterial ribosomal protein bL25 family. CTC subfamily. Part of the 50S ribosomal subunit; part of the 5S rRNA/L5/L18/L25 subcomplex. Contacts the 5S rRNA. Binds to the 5S rRNA independently of L5 and L18.

This is one of the proteins that binds to the 5S RNA in the ribosome where it forms part of the central protuberance. This chain is Large ribosomal subunit protein bL25, found in Polaromonas sp. (strain JS666 / ATCC BAA-500).